Consider the following 145-residue polypeptide: Ribosomal RNA large subunit methyltransferase H (145 aa).

S-adenosyl-L-methionine contacts are provided by residues L64, G93, and 112 to 117 (LSALTF).

This sequence belongs to the RNA methyltransferase RlmH family. Homodimer.

The protein resides in the cytoplasm. The enzyme catalyses pseudouridine(1915) in 23S rRNA + S-adenosyl-L-methionine = N(3)-methylpseudouridine(1915) in 23S rRNA + S-adenosyl-L-homocysteine + H(+). Functionally, specifically methylates the pseudouridine at position 1915 (m3Psi1915) in 23S rRNA. The protein is Ribosomal RNA large subunit methyltransferase H of Prochlorococcus marinus (strain SARG / CCMP1375 / SS120).